We begin with the raw amino-acid sequence, 207 residues long: Octanoyltransferase (207 aa).

One can recognise a BPL/LPL catalytic domain in the interval 29 to 204 (AETRDELWVV…HLERHLSTSK (176 aa)). Residues 68 to 75 (RGGQITYH), 135 to 137 (SLG), and 148 to 150 (GLS) each bind substrate. Catalysis depends on Cys-166, which acts as the Acyl-thioester intermediate.

Belongs to the LipB family.

The protein resides in the cytoplasm. The catalysed reaction is octanoyl-[ACP] + L-lysyl-[protein] = N(6)-octanoyl-L-lysyl-[protein] + holo-[ACP] + H(+). It functions in the pathway protein modification; protein lipoylation via endogenous pathway; protein N(6)-(lipoyl)lysine from octanoyl-[acyl-carrier-protein]: step 1/2. In terms of biological role, catalyzes the transfer of endogenously produced octanoic acid from octanoyl-acyl-carrier-protein onto the lipoyl domains of lipoate-dependent enzymes. Lipoyl-ACP can also act as a substrate although octanoyl-ACP is likely to be the physiological substrate. The polypeptide is Octanoyltransferase (Chromobacterium violaceum (strain ATCC 12472 / DSM 30191 / JCM 1249 / CCUG 213 / NBRC 12614 / NCIMB 9131 / NCTC 9757 / MK)).